An 807-amino-acid polypeptide reads, in one-letter code: MKYDFSALEKKWQSRWADEQTFASSADQEKPKYYVLDMFPYPSGSGLHVGHLEGYTATDIMARYKRCQGHNVLHPMGWDAFGLPAEQFAIKTGTHPRLTTEKNVASFRETLKSMGFSYDWSREINTTDPNYFKWTQWIFLKLYEKGLAYISEVDVNWCEELKVVLANEEVDEKIADGYTVVRRPLRQWVLKITAYAERLLKDLDEVDWPENVKQMQRNWIGRSEGMEIDFELRCHRTNLRVYTTRPDTLFGATYLVISPEHPMAEKLAIAQQLVAVKKYIEQAKLKTELERTGLQKEKTGVFTGSYAINPANGEALPVWISDFVLTSYGTGAIMSVPAHDSRDWEFAKKFGLPIREVIKSPHDVQERVFDGKESVCVNSANDEISINGLDFKTAFDRMAAWLESKGKGKRKVNYKLRDWVFSRQRYWGEPIPIKHYEDGTMRPETNLPLTLPEVEAYQPTSTGESPLANIESWLYGEDEHGKFRRETNTMPQWAGSCWYYLRFIDPQNSDALVDPSLEQYWMNVDLYIGGAEHAVLHLLYSRFWHKVLYDLGVVSTKEPFQRLFNQGMILGEDNEKMSKSRGNVIPADHVLSTYGADALRLYEMFLGPLDQVKPWNTHGIEGISRFLNKVWRLVWDENTETQKTTEDKPSEAILKRMHKAIKKVTEDTEQLKFNTAISEMMVLVNELHKAGCYSRETTETLLVLLSPFAPHITEELWQALGHAESISGAVWPVFDAKLATDDVLTIAVQVNGKLRGTFEAPAGCTKEEMIESAKKVESVAKFLDGQQIVKEIAVPGKLVNFAVKPQQ.

A 'HIGH' region motif is present at residues P40–H51. Positions K576 to S580 match the 'KMSKS' region motif. Residue K579 participates in ATP binding.

This sequence belongs to the class-I aminoacyl-tRNA synthetase family.

It is found in the cytoplasm. It catalyses the reaction tRNA(Leu) + L-leucine + ATP = L-leucyl-tRNA(Leu) + AMP + diphosphate. The polypeptide is Leucine--tRNA ligase (Chlorobaculum tepidum (strain ATCC 49652 / DSM 12025 / NBRC 103806 / TLS) (Chlorobium tepidum)).